Here is a 287-residue protein sequence, read N- to C-terminus: uncharacterized protein (287 aa).

A signal peptide spans 1–20 (MKVICGSVFLFSLFFQVVLG). The Extracellular portion of the chain corresponds to 22-201 (YFSSSSGNPN…AFYGPRRNIK (180 aa)). N-linked (GlcNAc...) asparagine glycans are attached at residues N120, N154, and N166. A helical transmembrane segment spans residues 202–222 (AAIAVPSVILGLILVALVYYA). At 223-287 (YRKDTWKIYM…YYQSQVKKFH (65 aa)) the chain is on the cytoplasmic side.

Its subcellular location is the membrane. This is an uncharacterized protein from Schizosaccharomyces pombe (strain 972 / ATCC 24843) (Fission yeast).